Reading from the N-terminus, the 301-residue chain is UDP-N-acetylenolpyruvoylglucosamine reductase (301 aa).

The FAD-binding PCMH-type domain maps to 26–193; sequence KTGGPAQYLA…VSATFGLEPG (168 aa). The active site involves Arg172. The Proton donor role is filled by Ser222. Glu292 is an active-site residue.

The protein belongs to the MurB family. Requires FAD as cofactor.

It is found in the cytoplasm. The enzyme catalyses UDP-N-acetyl-alpha-D-muramate + NADP(+) = UDP-N-acetyl-3-O-(1-carboxyvinyl)-alpha-D-glucosamine + NADPH + H(+). Its pathway is cell wall biogenesis; peptidoglycan biosynthesis. Functionally, cell wall formation. This is UDP-N-acetylenolpyruvoylglucosamine reductase from Lactobacillus johnsonii (strain CNCM I-12250 / La1 / NCC 533).